Consider the following 597-residue polypeptide: Miltiradiene synthase KSL2, chloroplastic (597 aa).

Residues 1–51 (MSLAFNLRAIPFSGHTIQSRRGLFPVHESPMITTKPFVAVKCSLTTSTDLM) constitute a chloroplast transit peptide. Residues Asp-329, Asp-333, Asn-473, and Glu-481 each coordinate Mg(2+). The short motif at 329–333 (DDFFD) is the DDXXD motif element.

It belongs to the terpene synthase family. Mg(2+) serves as cofactor.

It is found in the plastid. The protein resides in the chloroplast. The catalysed reaction is (+)-copalyl diphosphate = miltiradiene + diphosphate. It participates in secondary metabolite biosynthesis; terpenoid biosynthesis. Its function is as follows. Involved in the biosynthesis of ent-kaurene diterpenoids natural products such as oridonin, miltiradiene, eriocalyxin B and nezukol, known to exhibit antitumor, anti-inflammatory and antibacterial activities. Catalyzes the conversion of (+)-copalyl diphosphate ((+)-CPP) to miltiradiene. This chain is Miltiradiene synthase KSL2, chloroplastic, found in Isodon japonicus (Scutellaria japonica).